Here is a 287-residue protein sequence, read N- to C-terminus: 4-hydroxybenzoate octaprenyltransferase (287 aa).

8 consecutive transmembrane segments (helical) span residues 19–39 (IGSL…ADGL), 42–62 (WHVL…GCVI), 95–115 (FFAV…TLTI), 136–156 (YLPQ…AYAA), 166–186 (WLLF…YAMV), 210–230 (IIGL…SQLA), 233–253 (GIYY…QWLI), and 264–284 (AFLN…ASVL).

The protein belongs to the UbiA prenyltransferase family. Requires Mg(2+) as cofactor.

Its subcellular location is the cell inner membrane. The enzyme catalyses all-trans-octaprenyl diphosphate + 4-hydroxybenzoate = 4-hydroxy-3-(all-trans-octaprenyl)benzoate + diphosphate. Its pathway is cofactor biosynthesis; ubiquinone biosynthesis. In terms of biological role, catalyzes the prenylation of para-hydroxybenzoate (PHB) with an all-trans polyprenyl group. Mediates the second step in the final reaction sequence of ubiquinone-8 (UQ-8) biosynthesis, which is the condensation of the polyisoprenoid side chain with PHB, generating the first membrane-bound Q intermediate 3-octaprenyl-4-hydroxybenzoate. The sequence is that of 4-hydroxybenzoate octaprenyltransferase from Aliivibrio fischeri (strain MJ11) (Vibrio fischeri).